Reading from the N-terminus, the 192-residue chain is Erythropoietin (192 aa).

The signal sequence occupies residues 1 to 26 (MGVPERPTLLLLLSLLLIPLGLPVLC). An intrachain disulfide couples C33 to C187. Residues N50, N64, and N109 are each glycosylated (N-linked (GlcNAc...) asparagine).

Belongs to the EPO/TPO family. Produced by kidney or liver of adult mammals and by liver of fetal or neonatal mammals.

It is found in the secreted. Its function is as follows. Hormone involved in the regulation of erythrocyte proliferation and differentiation and the maintenance of a physiological level of circulating erythrocyte mass. Binds to EPOR leading to EPOR dimerization and JAK2 activation thereby activating specific downstream effectors, including STAT1 and STAT3. This is Erythropoietin (Epo) from Mus musculus (Mouse).